The primary structure comprises 643 residues: Long-chain fatty acid transport protein 4 (643 aa).

2 helical membrane-spanning segments follow: residues 20-42 (LPWTQVGFSLLFLYLGSGGWRFI) and 139-156 (FVGLWLGMAKLGVEAALI). 243 to 254 (YIYTSGTTGLPK) lines the AMP pocket.

Belongs to the ATP-dependent AMP-binding enzyme family. In terms of tissue distribution, expressed at highest levels in brain, testis, colon and kidney. Expressed at medium levels in heart and liver, small intestine and stomach. Expressed at low levels in peripheral leukocytes, bone marrow, skeletal muscle and aorta. Expressed in adipose tissue. Expressed in brain gray matter.

The protein localises to the endoplasmic reticulum membrane. It catalyses the reaction a fatty acid(in) = a fatty acid(out). The enzyme catalyses (9Z,12Z)-octadecadienoate(out) = (9Z,12Z)-octadecadienoate(in). The catalysed reaction is (9Z)-octadecenoate(out) = (9Z)-octadecenoate(in). It carries out the reaction hexadecanoate(out) = hexadecanoate(in). It catalyses the reaction a long-chain fatty acid + ATP + CoA = a long-chain fatty acyl-CoA + AMP + diphosphate. The enzyme catalyses hexadecanoate + ATP + CoA = hexadecanoyl-CoA + AMP + diphosphate. The catalysed reaction is (E)-hexadec-2-enoate + ATP + CoA = (2E)-hexadecenoyl-CoA + AMP + diphosphate. It carries out the reaction (9Z)-octadecenoate + ATP + CoA = (9Z)-octadecenoyl-CoA + AMP + diphosphate. It catalyses the reaction (5Z,8Z,11Z,14Z)-eicosatetraenoate + ATP + CoA = (5Z,8Z,11Z,14Z)-eicosatetraenoyl-CoA + AMP + diphosphate. The enzyme catalyses a very long-chain fatty acid + ATP + CoA = a very long-chain fatty acyl-CoA + AMP + diphosphate. The catalysed reaction is tetracosanoate + ATP + CoA = tetracosanoyl-CoA + AMP + diphosphate. Its function is as follows. Mediates the levels of long-chain fatty acids (LCFA) in the cell by facilitating their transport across cell membranes. Appears to be the principal fatty acid transporter in small intestinal enterocytes. Also functions as an acyl-CoA ligase catalyzing the ATP-dependent formation of fatty acyl-CoA using LCFA and very-long-chain fatty acids (VLCFA) as substrates, which prevents fatty acid efflux from cells and might drive more fatty acid uptake. Plays a role in the formation of the epidermal barrier. Required for fat absorption in early embryogenesis. Probably involved in fatty acid transport across the blood barrier. Indirectly inhibits RPE65 via substrate competition and via production of VLCFA derivatives like lignoceroyl-CoA. Prevents light-induced degeneration of rods and cones. In Homo sapiens (Human), this protein is Long-chain fatty acid transport protein 4.